A 243-amino-acid chain; its full sequence is Leucyl/phenylalanyl-tRNA--protein transferase (243 aa).

The protein belongs to the L/F-transferase family.

It is found in the cytoplasm. It carries out the reaction N-terminal L-lysyl-[protein] + L-leucyl-tRNA(Leu) = N-terminal L-leucyl-L-lysyl-[protein] + tRNA(Leu) + H(+). The enzyme catalyses N-terminal L-arginyl-[protein] + L-leucyl-tRNA(Leu) = N-terminal L-leucyl-L-arginyl-[protein] + tRNA(Leu) + H(+). It catalyses the reaction L-phenylalanyl-tRNA(Phe) + an N-terminal L-alpha-aminoacyl-[protein] = an N-terminal L-phenylalanyl-L-alpha-aminoacyl-[protein] + tRNA(Phe). Functions in the N-end rule pathway of protein degradation where it conjugates Leu, Phe and, less efficiently, Met from aminoacyl-tRNAs to the N-termini of proteins containing an N-terminal arginine or lysine. The polypeptide is Leucyl/phenylalanyl-tRNA--protein transferase (Saccharophagus degradans (strain 2-40 / ATCC 43961 / DSM 17024)).